A 75-amino-acid chain; its full sequence is Cytoplasmic envelopment protein 3 (75 aa).

A lipid anchor (N-myristoyl glycine; by host) is attached at G2. A compositionally biased stretch (acidic residues) spans 53–65 (EGLEYDEDSENDE). Residues 53–75 (EGLEYDEDSENDELLFLPNKKPN) form a disordered region.

Belongs to the herpesviridae cytoplasmic envelopment protein 3 family. As to quaternary structure, interacts with BGLF2; this interaction is essential for the proper localization of each protein to the assembly complex and thus for the production of infectious virus. Post-translationally, myristoylation and palmitoylation (probably on one or more of the nearby cysteines at the N-terminus) enable membrane-binding and Golgi apparatus-specific targeting and are essential for efficient packaging. Phosphorylated. Phosphorylation does not seem to be required for recycling to the host Golgi apparatus. Packaging is selective for underphosphorylated forms.

The protein localises to the virion tegument. The protein resides in the virion membrane. It localises to the host cell membrane. It is found in the host Golgi apparatus membrane. Functionally, plays an important role in the cytoplasmic envelopment of tegument proteins and capsids during the assembly and egress processes. Also participates in viral entry at the fusion step probably by regulating the core fusion machinery. In Homo sapiens (Human), this protein is Cytoplasmic envelopment protein 3.